Reading from the N-terminus, the 132-residue chain is Small ribosomal subunit protein uS8 (132 aa).

This sequence belongs to the universal ribosomal protein uS8 family. In terms of assembly, part of the 30S ribosomal subunit. Contacts proteins S5 and S12.

Its function is as follows. One of the primary rRNA binding proteins, it binds directly to 16S rRNA central domain where it helps coordinate assembly of the platform of the 30S subunit. The chain is Small ribosomal subunit protein uS8 from Staphylococcus saprophyticus subsp. saprophyticus (strain ATCC 15305 / DSM 20229 / NCIMB 8711 / NCTC 7292 / S-41).